A 291-amino-acid chain; its full sequence is 3-hydroxy-5-phosphonooxypentane-2,4-dione thiolase (291 aa).

The active-site Schiff-base intermediate with substrate is lysine 203.

The protein belongs to the DeoC/FbaB aldolase family. As to quaternary structure, homodecamer.

It localises to the cytoplasm. The enzyme catalyses dihydroxyacetone phosphate + acetyl-CoA = 3-hydroxy-2,4-dioxopentyl phosphate + CoA. Functionally, involved in the degradation of phospho-AI-2, thereby terminating induction of the lsr operon and closing the AI-2 signaling cycle. Catalyzes the transfer of an acetyl moiety from 3-hydroxy-5-phosphonooxypentane-2,4-dione to CoA to form glycerone phosphate and acetyl-CoA. The polypeptide is 3-hydroxy-5-phosphonooxypentane-2,4-dione thiolase (Yersinia pseudotuberculosis serotype O:1b (strain IP 31758)).